The sequence spans 87 residues: Large ribosomal subunit protein bL27 (87 aa).

The segment at 1-21 (MAHKKAGGSSRNGRDSESKRL) is disordered.

Belongs to the bacterial ribosomal protein bL27 family.

The protein is Large ribosomal subunit protein bL27 of Paraburkholderia phytofirmans (strain DSM 17436 / LMG 22146 / PsJN) (Burkholderia phytofirmans).